Reading from the N-terminus, the 739-residue chain is Probable endo-1,3(4)-beta-glucanase An02g00850 (739 aa).

Positions 1–24 are cleaved as a signal peptide; that stretch reads MPTSTLLWSVGSLALSSMVLPAAA. Residues 31–283 form the GH16 domain; it reads ETWKGEDFLT…WAGGVYSTSG (253 aa). N-linked (GlcNAc...) asparagine glycans are attached at residues asparagine 59 and asparagine 74. The active-site Nucleophile is the glutamate 140. The Proton donor role is filled by glutamate 145. An N-linked (GlcNAc...) asparagine glycan is attached at asparagine 396. Low complexity-rich tracts occupy residues 431 to 442, 452 to 499, and 507 to 522; these read SEATEASNSEGS, TGAS…AGAT, and GASG…SAAA. The disordered stretch occupies residues 431–718; sequence SEATEASNSE…TPSTPVFTGG (288 aa). N-linked (GlcNAc...) asparagine glycosylation is found at asparagine 459 and asparagine 482. A compositionally biased stretch (polar residues) spans 523–532; sequence TPSNVSSTGA. N-linked (GlcNAc...) asparagine glycosylation is found at asparagine 526 and asparagine 537. A compositionally biased stretch (polar residues) spans 539 to 548; that stretch reads SEDSSASSEA. Over residues 561–587 the composition is skewed to low complexity; the sequence is GASAEANGNDSASSNAATASNVSGASA. Residues asparagine 569, asparagine 581, asparagine 592, and asparagine 620 are each glycosylated (N-linked (GlcNAc...) asparagine). Over residues 597-641 the composition is skewed to low complexity; sequence ASAGANAGSSAAPSSVSGASAEANGSEGSSSHSSGSQAGAHSYGS. Over residues 654–673 the composition is skewed to polar residues; sequence PSSSSHAFATAPSSTGSSRV. Residues 674–713 show a composition bias toward low complexity; it reads PTSAAAANNAAAATQGSSASGSNSGSSGHGSSSATTPSTP. Glycine 717 carries the GPI-anchor amidated glycine lipid modification. Residues 718 to 739 constitute a propeptide, removed in mature form; it reads GANKLTLGASSVLSVLAFALLA.

It belongs to the glycosyl hydrolase 16 family.

The protein localises to the cell membrane. The catalysed reaction is Endohydrolysis of (1-&gt;3)- or (1-&gt;4)-linkages in beta-D-glucans when the glucose residue whose reducing group is involved in the linkage to be hydrolyzed is itself substituted at C-3.. Functionally, mixed-linked glucanase involved in the degradation of complex natural cellulosic substrates. This is Probable endo-1,3(4)-beta-glucanase An02g00850 from Aspergillus niger (strain ATCC MYA-4892 / CBS 513.88 / FGSC A1513).